A 444-amino-acid polypeptide reads, in one-letter code: DNA repair protein RadA (444 aa).

A C4-type zinc finger spans residues 8–25 (CSNCGNISPKWSGQCFDC). Position 89-96 (89-96 (GDPGIGKS)) interacts with ATP. The RadA KNRFG motif motif lies at 248 to 252 (KNRFG). Residues 347–444 (EVYLSIAGGL…HLKDLKEIIK (98 aa)) are lon-protease-like.

It belongs to the RecA family. RadA subfamily.

Its function is as follows. DNA-dependent ATPase involved in processing of recombination intermediates, plays a role in repairing DNA breaks. Stimulates the branch migration of RecA-mediated strand transfer reactions, allowing the 3' invading strand to extend heteroduplex DNA faster. Binds ssDNA in the presence of ADP but not other nucleotides, has ATPase activity that is stimulated by ssDNA and various branched DNA structures, but inhibited by SSB. Does not have RecA's homology-searching function. The chain is DNA repair protein RadA from Rickettsia conorii (strain ATCC VR-613 / Malish 7).